The primary structure comprises 250 residues: 3-deoxy-manno-octulosonate cytidylyltransferase (250 aa).

It belongs to the KdsB family.

The protein resides in the cytoplasm. It carries out the reaction 3-deoxy-alpha-D-manno-oct-2-ulosonate + CTP = CMP-3-deoxy-beta-D-manno-octulosonate + diphosphate. The protein operates within nucleotide-sugar biosynthesis; CMP-3-deoxy-D-manno-octulosonate biosynthesis; CMP-3-deoxy-D-manno-octulosonate from 3-deoxy-D-manno-octulosonate and CTP: step 1/1. Its pathway is bacterial outer membrane biogenesis; lipopolysaccharide biosynthesis. In terms of biological role, activates KDO (a required 8-carbon sugar) for incorporation into bacterial lipopolysaccharide in Gram-negative bacteria. The chain is 3-deoxy-manno-octulosonate cytidylyltransferase from Actinobacillus pleuropneumoniae serotype 7 (strain AP76).